Consider the following 912-residue polypeptide: DNA (cytosine-5)-methyltransferase 3A (912 aa).

2 disordered regions span residues 1–178 (MPAM…GWES) and 221–286 (IAGM…EYED). The segment covering 17–40 (AEREEDRKDGEEQEEPRGKEERQE) has biased composition (basic and acidic residues). Residues 47–57 (KVGRPGRKRKH) are compositionally biased toward basic residues. Polar residues predominate over residues 74 to 83 (KSPSMAQDSG). S105 is modified (phosphoserine). A compositionally biased stretch (low complexity) spans 113-128 (GAPAEGEGAAETLPEA). The residue at position 124 (T124) is a Phosphothreonine. Basic and acidic residues predominate over residues 149-167 (AGKEQKETNIESMKMEGSR). Residue K162 forms a Glycyl lysine isopeptide (Lys-Gly) (interchain with G-Cter in SUMO2) linkage. The residue at position 171 (R171) is an Omega-N-methylarginine. The segment at 199 to 403 (SKRKRDEWLA…DTAKAVEVQN (205 aa)) is interaction with DNMT1 and DNMT3B. Phosphoserine occurs at positions 243 and 255. The segment covering 246-260 (AVQQPTDPASPTVAT) has biased composition (polar residues). Residue T261 is modified to Phosphothreonine. Phosphoserine is present on S267. Basic and acidic residues predominate over residues 269-279 (AGDKNATKAGD). Residues 292–350 (IGELVWGKLRGFSWWPGRIVSWWMTGRSRAAEGTRWVMWFGDGKFSVVCVEKLMPLSSF) enclose the PWWP domain. Phosphoserine is present on residues S390 and S393. The disordered stretch occupies residues 447-466 (AYAPPPPAKKPRKSTAEKPK). The ADD domain maps to 482–614 (EVRQKCRNIE…LQMFFANNHD (133 aa)). Residues 493–523 (ICISCGSLNVTLEHPLFVGGMCQNCKNCFLE) form a GATA-type; atypical zinc finger. The interval 494–586 (CISCGSLNVT…KEDPWNCYMC (93 aa)) is interaction with the PRC2/EED-EZH2 complex. The PHD-type; atypical zinc finger occupies 534-590 (QSYCTICCGGREVLMCGNNNCCRCFCVECVDLLVGPGAAQAAIKEDPWNCYMCGHKG). In terms of domain architecture, SAM-dependent MTase C5-type spans 634–912 (IRVLSLFDGI…APLKEYFACV (279 aa)). Residues 641 to 645 (DGIAT), E664, and 686 to 688 (DVR) contribute to the S-adenosyl-L-methionine site. The active site involves C710. Position 710 is an S-methylcysteine; by autocatalysis (C710). 891 to 893 (RSW) is an S-adenosyl-L-methionine binding site.

The protein belongs to the class I-like SAM-binding methyltransferase superfamily. C5-methyltransferase family. In terms of assembly, heterotetramer composed of 1 DNMT3A homodimer and 2 DNMT3L subunits (DNMT3L-DNMT3A-DNMT3A-DNMT3L). Interacts with UBC9, PIAS1 and PIAS2. Binds the ZBTB18 transcriptional repressor. Interacts with SETDB1. Associates with HDAC1 through its ADD domain. Interacts with UHRF1. Interacts with DNMT1 and DNMT3B. Interacts with the PRC2/EED-EZH2 complex. Interacts with MPHOSPH8. Interacts with histone H3 that is not methylated at 'Lys-4' (H3K4). Interacts with SPOCD1. Interacts with ZNF263; recruited to the SIX3 promoter along with other proteins involved in chromatin modification and transcriptional corepression where it contributes to transcriptional repression. Post-translationally, sumoylated; sumoylation disrupts the ability to interact with histone deacetylases (HDAC1 and HDAC2) and repress transcription. In terms of processing, auto-methylated at Cys-710: auto-methylation takes place in absence of DNA substrate and inactivates the DNA methyltransferase activity. Inactivation by auto-methylation may be used to inactivate unused DNA methyltransferases in the cell. As to expression, highly expressed in fetal tissues, skeletal muscle, heart, peripheral blood mononuclear cells, kidney, and at lower levels in placenta, brain, liver, colon, spleen, small intestine and lung.

It localises to the nucleus. Its subcellular location is the chromosome. The protein localises to the cytoplasm. It catalyses the reaction a 2'-deoxycytidine in DNA + S-adenosyl-L-methionine = a 5-methyl-2'-deoxycytidine in DNA + S-adenosyl-L-homocysteine + H(+). The enzyme catalyses L-cysteinyl-[protein] + S-adenosyl-L-methionine = S-methyl-L-cysteinyl-[protein] + S-adenosyl-L-homocysteine + H(+). With respect to regulation, activated by binding to the regulatory factor DNMT3L. Auto-methylation at Cys-710 in absence of DNA inactivates the DNA methyltransferase activity. Required for genome-wide de novo methylation and is essential for the establishment of DNA methylation patterns during development. DNA methylation is coordinated with methylation of histones. It modifies DNA in a non-processive manner and also methylates non-CpG sites. May preferentially methylate DNA linker between 2 nucleosomal cores and is inhibited by histone H1. Plays a role in paternal and maternal imprinting. Required for methylation of most imprinted loci in germ cells. Acts as a transcriptional corepressor for ZBTB18. Recruited to trimethylated 'Lys-36' of histone H3 (H3K36me3) sites. Can actively repress transcription through the recruitment of HDAC activity. Also has weak auto-methylation activity on Cys-710 in absence of DNA. This is DNA (cytosine-5)-methyltransferase 3A (DNMT3A) from Homo sapiens (Human).